We begin with the raw amino-acid sequence, 429 residues long: Serine hydroxymethyltransferase (429 aa).

Position 120-122 (120-122) interacts with (6S)-5,6,7,8-tetrahydrofolate; that stretch reads GHI. Lysine 226 carries the post-translational modification N6-(pyridoxal phosphate)lysine.

The protein belongs to the SHMT family. As to quaternary structure, homodimer. Requires pyridoxal 5'-phosphate as cofactor.

It is found in the cytoplasm. It functions in the pathway amino-acid biosynthesis; glycine biosynthesis; glycine from L-serine: step 1/1. In terms of biological role, catalyzes the reversible interconversion of serine and glycine with a modified folate serving as the one-carbon carrier. Also exhibits a pteridine-independent aldolase activity toward beta-hydroxyamino acids, producing glycine and aldehydes, via a retro-aldol mechanism. This Pyrobaculum arsenaticum (strain DSM 13514 / JCM 11321 / PZ6) protein is Serine hydroxymethyltransferase.